Here is a 247-residue protein sequence, read N- to C-terminus: Phosphatidylserine decarboxylase proenzyme (247 aa).

Serine 206 (schiff-base intermediate with substrate; via pyruvic acid) is an active-site residue. Serine 206 is modified (pyruvic acid (Ser); by autocatalysis).

It belongs to the phosphatidylserine decarboxylase family. PSD-A subfamily. As to quaternary structure, heterodimer of a large membrane-associated beta subunit and a small pyruvoyl-containing alpha subunit. The cofactor is pyruvate. Is synthesized initially as an inactive proenzyme. Formation of the active enzyme involves a self-maturation process in which the active site pyruvoyl group is generated from an internal serine residue via an autocatalytic post-translational modification. Two non-identical subunits are generated from the proenzyme in this reaction, and the pyruvate is formed at the N-terminus of the alpha chain, which is derived from the carboxyl end of the proenzyme. The post-translation cleavage follows an unusual pathway, termed non-hydrolytic serinolysis, in which the side chain hydroxyl group of the serine supplies its oxygen atom to form the C-terminus of the beta chain, while the remainder of the serine residue undergoes an oxidative deamination to produce ammonia and the pyruvoyl prosthetic group on the alpha chain.

It is found in the cell membrane. It catalyses the reaction a 1,2-diacyl-sn-glycero-3-phospho-L-serine + H(+) = a 1,2-diacyl-sn-glycero-3-phosphoethanolamine + CO2. It functions in the pathway phospholipid metabolism; phosphatidylethanolamine biosynthesis; phosphatidylethanolamine from CDP-diacylglycerol: step 2/2. Its function is as follows. Catalyzes the formation of phosphatidylethanolamine (PtdEtn) from phosphatidylserine (PtdSer). The chain is Phosphatidylserine decarboxylase proenzyme from Nitrobacter winogradskyi (strain ATCC 25391 / DSM 10237 / CIP 104748 / NCIMB 11846 / Nb-255).